A 228-amino-acid polypeptide reads, in one-letter code: uncharacterized protein (228 aa).

This is an uncharacterized protein from Acidianus ambivalens (Desulfurolobus ambivalens).